Here is a 107-residue protein sequence, read N- to C-terminus: Probable monothiol glutaredoxin 2 (107 aa).

The 101-residue stretch at 7-107 (LEFIQNAIKK…LEKMLKDVVV (101 aa)) folds into the Glutaredoxin domain. Lysine 24 contacts glutathione. [2Fe-2S] cluster is bound at residue cysteine 32. Glutathione-binding positions include arginine 61, phenylalanine 73, and 86–87 (CD).

Belongs to the glutaredoxin family. Monothiol subfamily.

The protein is Probable monothiol glutaredoxin 2 (grxC2) of Rickettsia prowazekii (strain Madrid E).